Reading from the N-terminus, the 751-residue chain is NAD(P)H-quinone oxidoreductase subunit 5, chloroplastic (751 aa).

The next 16 membrane-spanning stretches (helical) occupy residues 9 to 29, 40 to 60, 89 to 109, 125 to 145, 147 to 167, 185 to 205, 219 to 239, 258 to 278, 280 to 300, 327 to 347, 354 to 374, 396 to 416, 425 to 445, 543 to 563, 599 to 619, and 719 to 739; these read WIIPFIPLTVPLLIGAGLIIF, WAFPSILLLSLVMLFSTKLSI, VDPLTSIMSMLITTVGILVLI, FAYLSFFNTSMLGLVTSSNFI, IYIFWELVGMCSYLLIGFWFT, GDFGLLLGILGLYWLTGSFEF, NEVHFLVGTVCTFLLFAGAVA, TPISALIHAATMVAAGIFLVA, LFPLLIVTPFILNLIALVGII, LGYMMLALGMGSYRAALFHLI, ALLFLGSGCVIHSMEAIVGYS, TAFLLGTLSLSGIPPLACFWS, WLYSPIFAIISWATVGFTAFY, LFPLLVLIIFTGVIGFIGIPF, FLTNATLSVSIAYSGIVLASF, and ISSYLFLYLLYASIFLLIYYF.

This sequence belongs to the complex I subunit 5 family. In terms of assembly, NDH is composed of at least 16 different subunits, 5 of which are encoded in the nucleus.

The protein resides in the plastid. The protein localises to the chloroplast thylakoid membrane. The enzyme catalyses a plastoquinone + NADH + (n+1) H(+)(in) = a plastoquinol + NAD(+) + n H(+)(out). The catalysed reaction is a plastoquinone + NADPH + (n+1) H(+)(in) = a plastoquinol + NADP(+) + n H(+)(out). Functionally, NDH shuttles electrons from NAD(P)H:plastoquinone, via FMN and iron-sulfur (Fe-S) centers, to quinones in the photosynthetic chain and possibly in a chloroplast respiratory chain. The immediate electron acceptor for the enzyme in this species is believed to be plastoquinone. Couples the redox reaction to proton translocation, and thus conserves the redox energy in a proton gradient. The protein is NAD(P)H-quinone oxidoreductase subunit 5, chloroplastic (ndhF) of Fagopyrum esculentum subsp. ancestrale (Wild buckwheat).